A 334-amino-acid polypeptide reads, in one-letter code: Small ribosomal subunit protein uS2 (334 aa).

Belongs to the universal ribosomal protein uS2 family.

In Xanthobacter autotrophicus (strain ATCC BAA-1158 / Py2), this protein is Small ribosomal subunit protein uS2.